Reading from the N-terminus, the 351-residue chain is Inositol monophosphatase 3 (351 aa).

A helical membrane pass occupies residues 11-31 (LGIGVFCLLALGVLYHVYSGF). The Mg(2+) site is built by glutamate 121, aspartate 162, leucine 164, aspartate 165, and aspartate 288. Glutamate 121 lines the substrate pocket. Substrate contacts are provided by residues 164-167 (LDAT) and aspartate 288.

It belongs to the inositol monophosphatase superfamily. It depends on Mg(2+) as a cofactor.

The protein localises to the membrane. It carries out the reaction a myo-inositol phosphate + H2O = myo-inositol + phosphate. It participates in polyol metabolism; myo-inositol biosynthesis; myo-inositol from D-glucose 6-phosphate: step 2/2. This Xenopus laevis (African clawed frog) protein is Inositol monophosphatase 3 (bpnt2).